The following is a 382-amino-acid chain: Alkanesulfonate monooxygenase (382 aa).

The protein belongs to the SsuD family. As to quaternary structure, homotetramer.

It carries out the reaction an alkanesulfonate + FMNH2 + O2 = an aldehyde + FMN + sulfite + H2O + 2 H(+). Catalyzes the desulfonation of aliphatic sulfonates. The polypeptide is Alkanesulfonate monooxygenase (Buttiauxella sp. (strain PNBS)).